We begin with the raw amino-acid sequence, 499 residues long: Proline--tRNA ligase (499 aa).

Basic and acidic residues predominate over residues 1–17 (MTKDGGKKDNQGQDKKA). A disordered region spans residues 1–21 (MTKDGGKKDNQGQDKKAQQYG).

Belongs to the class-II aminoacyl-tRNA synthetase family. ProS type 3 subfamily. In terms of assembly, homodimer.

It is found in the cytoplasm. The enzyme catalyses tRNA(Pro) + L-proline + ATP = L-prolyl-tRNA(Pro) + AMP + diphosphate. Catalyzes the attachment of proline to tRNA(Pro) in a two-step reaction: proline is first activated by ATP to form Pro-AMP and then transferred to the acceptor end of tRNA(Pro). Can inadvertently accommodate and process cysteine. The polypeptide is Proline--tRNA ligase (proS) (Deinococcus radiodurans (strain ATCC 13939 / DSM 20539 / JCM 16871 / CCUG 27074 / LMG 4051 / NBRC 15346 / NCIMB 9279 / VKM B-1422 / R1)).